We begin with the raw amino-acid sequence, 180 residues long: Methionine-R-sulfoxide reductase B2, mitochondrial (180 aa).

The N-terminal 41 residues, 1–41 (MSRFLVRLSTVVSKGATGKSVLPQKRIFAGIRLISSSTGLQ), are a transit peptide targeting the mitochondrion. The 130-residue stretch at 49–178 (STDWQRKLSP…NSVALNFKPR (130 aa)) folds into the MsrB domain. Cys-88, Cys-91, Cys-144, and Cys-147 together coordinate Zn(2+). The Nucleophile role is filled by Cys-167.

The protein belongs to the MsrB Met sulfoxide reductase family. The cofactor is Zn(2+).

The protein resides in the mitochondrion. The enzyme catalyses L-methionyl-[protein] + [thioredoxin]-disulfide + H2O = L-methionyl-(R)-S-oxide-[protein] + [thioredoxin]-dithiol. It carries out the reaction [thioredoxin]-disulfide + L-methionine + H2O = L-methionine (R)-S-oxide + [thioredoxin]-dithiol. In terms of biological role, methionine-sulfoxide reductase that specifically reduces methionine (R)-sulfoxide back to methionine. While in many cases, methionine oxidation is the result of random oxidation following oxidative stress, methionine oxidation is also a post-translational modification that takes place on specific residue. Upon oxidative stress, may play a role in the preservation of mitochondrial integrity by decreasing the intracellular reactive oxygen species build-up through its scavenging role, hence contributing to cell survival and protein maintenance. The sequence is that of Methionine-R-sulfoxide reductase B2, mitochondrial (msrb2) from Danio rerio (Zebrafish).